The chain runs to 2671 residues: Inositol 1,4,5-trisphosphate-gated calcium channel ITPR3 (2671 aa).

Over 1 to 2202 (MSEMSSFLHI…LIYWFSRRMT (2202 aa)) the chain is Cytoplasmic. MIR domains follow at residues 113 to 173 (GDVV…LRSN), 174 to 224 (GDNV…INLF), 232 to 288 (EEVL…VEVV), 295 to 372 (GGAG…LDPT), and 378 to 434 (DSFV…IVSV). Arg-266, Thr-268, Leu-269, and Arg-270 together coordinate 1D-myo-inositol 1,4,5-trisphosphate. The interval 322–342 (SYKGDASDPKAAGMGAQGRTG) is disordered. The 1D-myo-inositol 1,4,5-trisphosphate site is built by Arg-503, Lys-507, Arg-510, Tyr-567, Arg-568, and Lys-569. Position 743 (Arg-743) interacts with Ca(2+). 2 positions are modified to phosphoserine: Ser-916 and Ser-934. Positions 1122 and 1125 each coordinate Ca(2+). Disordered stretches follow at residues 1132 to 1163 (GSGK…PPGE) and 1809 to 1848 (NDLG…GPSL). Phosphoserine occurs at positions 1813, 1832, and 1834. Ca(2+) contacts are provided by Glu-1882 and Glu-1946. Residues Ala-1996, Glu-2149, and Lys-2152 each coordinate ATP. The chain crosses the membrane as a helical span at residues 2203–2223 (LWGSISFNLAVFINIIIAFFY). Residues 2224 to 2235 (PYMEGASTGVLD) lie on the Extracellular side of the membrane. The helical transmembrane segment at 2236-2256 (SPLISLLFWILICFSIAALFT) threads the bilayer. Over 2257 to 2264 (KRYSIRPL) the chain is Cytoplasmic. The chain crosses the membrane as a helical span at residues 2265–2285 (IVALILRSIYYLGIGPTLNIL). At 2286-2325 (GALNLTNKIVFVVSFVGNRGTFIRGYKAMVMDMEFLYHVG) the chain is on the extracellular side. A helical transmembrane segment spans residues 2326 to 2346 (YILTSVLGLFAHELFYSILLF). Over 2347-2368 (DLIYREETLFNVIKSVTRNGRS) the chain is Cytoplasmic. A helical membrane pass occupies residues 2369 to 2389 (ILLTALLALILVYLFSIVGFL). The Extracellular portion of the chain corresponds to 2390 to 2496 (FLKDDFILEV…ESLFPARVVY (107 aa)). Cys-2455 and Cys-2461 are disulfide-bonded. A helical transmembrane segment spans residues 2497-2517 (DLLFFFIVIIIVLNLIFGVII). Topologically, residues 2518–2671 (DTFADLRSEK…FVDVQNCISR (154 aa)) are cytoplasmic. 2 residues coordinate ATP: Cys-2538 and Phe-2539. Cys-2538 lines the Zn(2+) pocket. Residues Cys-2541 and His-2558 each contribute to the Zn(2+) site. ATP is bound by residues Lys-2560, His-2563, Asn-2564, and Met-2565. Position 2563 (His-2563) interacts with Zn(2+). Thr-2581 lines the Ca(2+) pocket. 2 positions are modified to phosphoserine: Ser-2609 and Ser-2670.

The protein belongs to the InsP3 receptor family. Homotetramer. Homodimer. Interacts with TRPC1, TRPC3 and TRPC4. Interacts with TRPV4. Interacts with SIGMAR1. Interacts with PML and AKT1. Interacts with IRAG2 (via coiled-coil domain). Interacts with CABP1. Interacts with TMBIM4/LFG4. Interacts with CEMIP. Interacts with TESPA1. Interacts with TMEM203. Interacts with BOK; regulates ITPR3 expression. Interacts with BCL2L10. Interacts with CHGA and CHGB. Post-translationally, phosphorylated by AKT1 on serine and/or threonine residues. In terms of tissue distribution, expressed in intestinal crypt and villus epithelial cells.

It localises to the endoplasmic reticulum membrane. It is found in the cytoplasmic vesicle. The protein localises to the secretory vesicle membrane. It catalyses the reaction Ca(2+)(in) = Ca(2+)(out). Its activity is regulated as follows. Inositol 1,4,5-trisphosphate-gated calcium channel is regulated by cytosolic calcium in a biphasic manner. At low concentrations, cytosolic calcium binds at a high-affinity juxtamembrane domain (JD) calcium binding site, allowing ITPR3 to activate by escaping a low-energy resting state through an ensemble of preactivated states. At high cytosolic calcium concentrations, ITPR3 preferentially enters an inhibited state stabilized by calcium binding at a second, low-affinity cytoplasmic domain (CD) calcium binding site. Functionally, inositol 1,4,5-trisphosphate-gated calcium channel that, upon 1D-myo-inositol 1,4,5-trisphosphate binding, transports calcium from the endoplasmic reticulum lumen to cytoplasm, thus releasing the intracellular calcium and therefore participates in cellular calcium ion homeostasis. 1D-myo-inositol 1,4,5-trisphosphate binds to the ligand-free channel without altering its global conformation, yielding the low-energy resting state, then progresses through resting-to preactivated transitions to the higher energy preactivated state, which increases affinity for calcium, promoting binding of the low basal cytosolic calcium at the juxtamembrane domain (JD) site, favoring the transition through the ensemble of high-energy intermediate states along the trajectory to the fully-open activated state. Upon opening, releases calcium in the cytosol where it can bind to the low-affinity cytoplasmic domain (CD) site and stabilizes the inhibited state to terminate calcium release. In Homo sapiens (Human), this protein is Inositol 1,4,5-trisphosphate-gated calcium channel ITPR3.